We begin with the raw amino-acid sequence, 443 residues long: UDP-N-acetylmuramate--L-alanine ligase (443 aa).

111 to 117 lines the ATP pocket; that stretch reads GAHGKTS.

This sequence belongs to the MurCDEF family.

The protein resides in the cytoplasm. The catalysed reaction is UDP-N-acetyl-alpha-D-muramate + L-alanine + ATP = UDP-N-acetyl-alpha-D-muramoyl-L-alanine + ADP + phosphate + H(+). It participates in cell wall biogenesis; peptidoglycan biosynthesis. Its function is as follows. Cell wall formation. The sequence is that of UDP-N-acetylmuramate--L-alanine ligase from Ligilactobacillus salivarius (strain UCC118) (Lactobacillus salivarius).